We begin with the raw amino-acid sequence, 86 residues long: Large ribosomal subunit protein eL20 (86 aa).

It belongs to the eukaryotic ribosomal protein eL20 family. Part of the 50S ribosomal subunit. Binds 23S rRNA.

The polypeptide is Large ribosomal subunit protein eL20 (Saccharolobus islandicus (strain Y.N.15.51 / Yellowstone #2) (Sulfolobus islandicus)).